The chain runs to 98 residues: NADH-ubiquinone oxidoreductase chain 4L (98 aa).

The next 3 membrane-spanning stretches (helical) occupy residues 1 to 21, 26 to 46, and 61 to 81; these read MPSISTNIILAFTTALLGVLI, LMSSLLCLEGMMLSMFILVSL, and IILLVFAACEAAVGLALLVMV.

This sequence belongs to the complex I subunit 4L family. As to quaternary structure, core subunit of respiratory chain NADH dehydrogenase (Complex I) which is composed of 45 different subunits.

Its subcellular location is the mitochondrion inner membrane. The catalysed reaction is a ubiquinone + NADH + 5 H(+)(in) = a ubiquinol + NAD(+) + 4 H(+)(out). Functionally, core subunit of the mitochondrial membrane respiratory chain NADH dehydrogenase (Complex I) which catalyzes electron transfer from NADH through the respiratory chain, using ubiquinone as an electron acceptor. Part of the enzyme membrane arm which is embedded in the lipid bilayer and involved in proton translocation. This is NADH-ubiquinone oxidoreductase chain 4L (MT-ND4L) from Galago senegalensis (Northern lesser bushbaby).